The following is a 489-amino-acid chain: Protein DETOXIFICATION 26 (489 aa).

The next 12 helical transmembrane spans lie at 42-62 (IWYI…ILII), 75-95 (LAAI…LLLG), 125-145 (IILF…TPIL), 157-177 (LTGT…FFFP), 190-210 (VIAI…WFFV), 217-237 (IIGT…ILFL), 271-291 (IMLC…GNLV), 300-320 (LSIC…FFAG), 342-362 (IVSI…IVIF), 385-405 (VLLA…GVAV), 416-436 (INLG…GWIF), and 442-462 (GIWA…LIII).

Belongs to the multi antimicrobial extrusion (MATE) (TC 2.A.66.1) family.

The protein localises to the membrane. The sequence is that of Protein DETOXIFICATION 26 from Arabidopsis thaliana (Mouse-ear cress).